The sequence spans 379 residues: Alcohol dehydrogenase 1 (379 aa).

Zn(2+)-binding residues include C47, T49, H69, C99, C102, C105, C113, and C177. 2 residues coordinate an alcohol: T49 and H69. T49 is an NAD(+) binding site. NAD(+) is bound by residues 202 to 207, D226, R231, T272, V295, 295 to 297, F322, and R372; these read GLGAVG and VGV.

Belongs to the zinc-containing alcohol dehydrogenase family. Homodimer. The cofactor is Zn(2+).

It localises to the cytoplasm. The enzyme catalyses a primary alcohol + NAD(+) = an aldehyde + NADH + H(+). It catalyses the reaction a secondary alcohol + NAD(+) = a ketone + NADH + H(+). The polypeptide is Alcohol dehydrogenase 1 (ADH1) (Hordeum vulgare (Barley)).